Consider the following 268-residue polypeptide: uncharacterized protein (268 aa).

Belongs to the glycosyltransferase 2 family.

This is an uncharacterized protein from Bacillus subtilis (strain 168).